Consider the following 669-residue polypeptide: DNA ligase (669 aa).

Residues 34–38 (DAEYD), 83–84 (SL), and E117 each bind NAD(+). K119 acts as the N6-AMP-lysine intermediate in catalysis. NAD(+)-binding residues include R140, E177, K293, and K317. 4 residues coordinate Zn(2+): C411, C414, C429, and C434. The BRCT domain occupies 591–669 (RLGGRFTGKT…EDEFLKMLEG (79 aa)).

It belongs to the NAD-dependent DNA ligase family. LigA subfamily. Mg(2+) is required as a cofactor. Mn(2+) serves as cofactor.

The catalysed reaction is NAD(+) + (deoxyribonucleotide)n-3'-hydroxyl + 5'-phospho-(deoxyribonucleotide)m = (deoxyribonucleotide)n+m + AMP + beta-nicotinamide D-nucleotide.. Functionally, DNA ligase that catalyzes the formation of phosphodiester linkages between 5'-phosphoryl and 3'-hydroxyl groups in double-stranded DNA using NAD as a coenzyme and as the energy source for the reaction. It is essential for DNA replication and repair of damaged DNA. In Geotalea daltonii (strain DSM 22248 / JCM 15807 / FRC-32) (Geobacter daltonii), this protein is DNA ligase.